The chain runs to 104 residues: Large ribosomal subunit protein bL21 (104 aa).

Over residues 78-91 (KRRRQNSRRKRGHR) the composition is skewed to basic residues. Residues 78–104 (KRRRQNSRRKRGHRQDHTVVRITGISA) form a disordered region.

It belongs to the bacterial ribosomal protein bL21 family. Part of the 50S ribosomal subunit. Contacts protein L20.

Functionally, this protein binds to 23S rRNA in the presence of protein L20. This is Large ribosomal subunit protein bL21 from Methylobacterium radiotolerans (strain ATCC 27329 / DSM 1819 / JCM 2831 / NBRC 15690 / NCIMB 10815 / 0-1).